The chain runs to 438 residues: Xylose isomerase (438 aa).

Catalysis depends on residues H100 and D103. Positions 231, 267, 270, 295, 306, 308, and 338 each coordinate Mg(2+).

Belongs to the xylose isomerase family. As to quaternary structure, homotetramer. Mg(2+) is required as a cofactor.

It is found in the cytoplasm. The enzyme catalyses alpha-D-xylose = alpha-D-xylulofuranose. This Pseudomonas savastanoi pv. phaseolicola (strain 1448A / Race 6) (Pseudomonas syringae pv. phaseolicola (strain 1448A / Race 6)) protein is Xylose isomerase.